We begin with the raw amino-acid sequence, 652 residues long: 1,4-alpha-glucan branching enzyme GlgB (652 aa).

Catalysis depends on Asp-322, which acts as the Nucleophile. The active-site Proton donor is the Glu-373.

It belongs to the glycosyl hydrolase 13 family. GlgB subfamily. In terms of assembly, monomer.

The enzyme catalyses Transfers a segment of a (1-&gt;4)-alpha-D-glucan chain to a primary hydroxy group in a similar glucan chain.. It functions in the pathway glycan biosynthesis; glycogen biosynthesis. Functionally, catalyzes the formation of the alpha-1,6-glucosidic linkages in glycogen by scission of a 1,4-alpha-linked oligosaccharide from growing alpha-1,4-glucan chains and the subsequent attachment of the oligosaccharide to the alpha-1,6 position. In Deinococcus geothermalis (strain DSM 11300 / CIP 105573 / AG-3a), this protein is 1,4-alpha-glucan branching enzyme GlgB.